Consider the following 2412-residue polypeptide: Centrosomal protein of 295 kDa (2412 aa).

The necessary for centriole targeting and microtubule association stretch occupies residues 1–540 (MKRKGMNTKL…KQADQPEVCC (540 aa)). Ser-13 is subject to Phosphoserine. Coiled coils occupy residues 63–84 (AEEL…LEKL), 114–134 (AERK…QKNQ), 209–273 (DAHL…DLAR), 489–535 (RRKQ…QADQ), and 563–592 (HQLL…VLKE). 2 disordered regions span residues 600–641 (SALV…YQPV) and 739–762 (LDSQ…PSPF). Ser-634 carries the post-translational modification Phosphoserine. Over residues 739–757 (LDSQQISSEDSENISSKPS) the composition is skewed to polar residues. The stretch at 811 to 841 (AQQGDLRFLQEQLELQKKVLQARQEAREKLL) forms a coiled coil. 4 disordered regions span residues 871–891 (SASA…ATVS), 973–1005 (DTQS…QDGS), 1158–1178 (LSSP…SVRS), and 1216–1240 (WVDT…QQTG). Composition is skewed to polar residues over residues 993-1005 (PSQS…QDGS), 1158-1176 (LSSP…SVSV), and 1224-1240 (FQSS…QQTG). Coiled-coil stretches lie at residues 1300 to 1327 (QQDS…EAHE) and 1448 to 1493 (QHDD…SKQI). The residue at position 1573 (Ser-1573) is a Phosphoserine. Disordered regions lie at residues 1820-1895 (LAHD…LSSV), 1916-1937 (ESFS…EETD), 2028-2048 (DLSS…SESS), and 2089-2111 (TEGS…SQHA). Residues 1836–1868 (SKSHDDNAEAVKVKKSDVEDHAVLSHAVSKEEA) are compositionally biased toward basic and acidic residues. The span at 1885–1895 (QEISQEPLSSV) shows a compositional bias: polar residues. Basic and acidic residues predominate over residues 1921–1935 (QTEHLEQESTNKQEE). Residues 2089–2108 (TEGSEQSFQQLRPEFSSQES) are compositionally biased toward polar residues. The interval 2367–2412 (SLQEAFMTRQTLTERSYQRQREIWNKTRLPQTKVSKEKLPTGCTGS) is ALMS motif.

In terms of assembly, interacts (via ALMS motif) with microtubules; this interaction is direct.

The protein localises to the cytoplasm. It is found in the cytoskeleton. It localises to the microtubule organizing center. Its subcellular location is the centrosome. The protein resides in the centriole. The protein localises to the spindle. Centriole-enriched microtubule-binding protein involved in centriole biogenesis. Essential for the generation of the distal portion of new-born centrioles in a CPAP- and CEP120-mediated elongation dependent manner during the cell cycle S/G2 phase after formation of the initiating cartwheel structure. Required for the recruitment of centriolar proteins, such as POC1B, POC5 and CEP135, into the distal portion of centrioles. Also required for centriole-to-centrosome conversion during mitotic progression, but is dispensable for cartwheel removal or centriole disengagement. Binds to and stabilizes centriolar microtubule. May be involved in ciliogenesis. This Mus musculus (Mouse) protein is Centrosomal protein of 295 kDa.